The following is a 335-amino-acid chain: Biotin synthase (335 aa).

In terms of domain architecture, Radical SAM core spans 46–274 (YDIQLASLFS…KSKIRLSAGR (229 aa)). [4Fe-4S] cluster contacts are provided by cysteine 61, cysteine 65, and cysteine 68. Cysteine 105, cysteine 137, cysteine 197, and arginine 269 together coordinate [2Fe-2S] cluster.

The protein belongs to the radical SAM superfamily. Biotin synthase family. In terms of assembly, homodimer. [4Fe-4S] cluster is required as a cofactor. [2Fe-2S] cluster serves as cofactor.

The catalysed reaction is (4R,5S)-dethiobiotin + (sulfur carrier)-SH + 2 reduced [2Fe-2S]-[ferredoxin] + 2 S-adenosyl-L-methionine = (sulfur carrier)-H + biotin + 2 5'-deoxyadenosine + 2 L-methionine + 2 oxidized [2Fe-2S]-[ferredoxin]. Its pathway is cofactor biosynthesis; biotin biosynthesis; biotin from 7,8-diaminononanoate: step 2/2. Functionally, catalyzes the conversion of dethiobiotin (DTB) to biotin by the insertion of a sulfur atom into dethiobiotin via a radical-based mechanism. The chain is Biotin synthase from Prochlorococcus marinus (strain MIT 9215).